The primary structure comprises 244 residues: 1-(5-phosphoribosyl)-5-[(5-phosphoribosylamino)methylideneamino] imidazole-4-carboxamide isomerase (244 aa).

The active-site Proton acceptor is the Asp13. Asp132 functions as the Proton donor in the catalytic mechanism.

This sequence belongs to the HisA/HisF family.

The protein resides in the cytoplasm. The enzyme catalyses 1-(5-phospho-beta-D-ribosyl)-5-[(5-phospho-beta-D-ribosylamino)methylideneamino]imidazole-4-carboxamide = 5-[(5-phospho-1-deoxy-D-ribulos-1-ylimino)methylamino]-1-(5-phospho-beta-D-ribosyl)imidazole-4-carboxamide. The protein operates within amino-acid biosynthesis; L-histidine biosynthesis; L-histidine from 5-phospho-alpha-D-ribose 1-diphosphate: step 4/9. This is 1-(5-phosphoribosyl)-5-[(5-phosphoribosylamino)methylideneamino] imidazole-4-carboxamide isomerase from Renibacterium salmoninarum (strain ATCC 33209 / DSM 20767 / JCM 11484 / NBRC 15589 / NCIMB 2235).